The sequence spans 635 residues: 1-deoxy-D-xylulose-5-phosphate synthase (635 aa).

Residues His74 and 115-117 each bind thiamine diphosphate; that span reads AHS. Residue Asp146 participates in Mg(2+) binding. Residues 147 to 148, Asn176, Tyr283, and Glu365 contribute to the thiamine diphosphate site; that span reads GA. Asn176 contacts Mg(2+).

Belongs to the transketolase family. DXPS subfamily. Homodimer. Mg(2+) serves as cofactor. It depends on thiamine diphosphate as a cofactor.

The enzyme catalyses D-glyceraldehyde 3-phosphate + pyruvate + H(+) = 1-deoxy-D-xylulose 5-phosphate + CO2. Its pathway is metabolic intermediate biosynthesis; 1-deoxy-D-xylulose 5-phosphate biosynthesis; 1-deoxy-D-xylulose 5-phosphate from D-glyceraldehyde 3-phosphate and pyruvate: step 1/1. Its function is as follows. Catalyzes the acyloin condensation reaction between C atoms 2 and 3 of pyruvate and glyceraldehyde 3-phosphate to yield 1-deoxy-D-xylulose-5-phosphate (DXP). This chain is 1-deoxy-D-xylulose-5-phosphate synthase, found in Polaromonas sp. (strain JS666 / ATCC BAA-500).